The chain runs to 331 residues: Chitin synthase export chaperone (331 aa).

Helical transmembrane passes span 52-72 (GAAS…ILHI), 84-104 (IITF…IDAG), 122-142 (GLTS…FQLY), 150-170 (VWLL…ISLL), 184-204 (VGMF…YLIM), 219-239 (LGHI…LYAF), and 249-269 (HYLD…MMVY).

This sequence belongs to the CHS7 family. In terms of assembly, interacts with chs3.

Its subcellular location is the endoplasmic reticulum membrane. In terms of biological role, chaperone required for the export of the chitin synthase chs3 from the endoplasmic reticulum. The protein is Chitin synthase export chaperone (chs7) of Aspergillus oryzae (strain ATCC 42149 / RIB 40) (Yellow koji mold).